The primary structure comprises 213 residues: Orotate phosphoribosyltransferase (213 aa).

Residue lysine 26 coordinates 5-phospho-alpha-D-ribose 1-diphosphate. Residue 34 to 35 (FF) participates in orotate binding. Residues 72 to 73 (YK), arginine 99, lysine 100, lysine 103, histidine 105, and 124 to 132 (DDVITAGTA) contribute to the 5-phospho-alpha-D-ribose 1-diphosphate site. Positions 128 and 156 each coordinate orotate.

It belongs to the purine/pyrimidine phosphoribosyltransferase family. PyrE subfamily. In terms of assembly, homodimer. The cofactor is Mg(2+).

The catalysed reaction is orotidine 5'-phosphate + diphosphate = orotate + 5-phospho-alpha-D-ribose 1-diphosphate. It participates in pyrimidine metabolism; UMP biosynthesis via de novo pathway; UMP from orotate: step 1/2. Functionally, catalyzes the transfer of a ribosyl phosphate group from 5-phosphoribose 1-diphosphate to orotate, leading to the formation of orotidine monophosphate (OMP). This Alteromonas mediterranea (strain DSM 17117 / CIP 110805 / LMG 28347 / Deep ecotype) protein is Orotate phosphoribosyltransferase.